Here is a 250-residue protein sequence, read N- to C-terminus: Coproheme decarboxylase (250 aa).

Fe-coproporphyrin III is bound by residues R131, 145 to 149, H172, and Q185; that span reads YPMNK. The active site involves Y145.

Belongs to the ChdC family. Type 1 subfamily. The cofactor is Fe-coproporphyrin III.

It carries out the reaction Fe-coproporphyrin III + 2 H2O2 + 2 H(+) = heme b + 2 CO2 + 4 H2O. The enzyme catalyses Fe-coproporphyrin III + H2O2 + H(+) = harderoheme III + CO2 + 2 H2O. The catalysed reaction is harderoheme III + H2O2 + H(+) = heme b + CO2 + 2 H2O. It functions in the pathway porphyrin-containing compound metabolism; protoheme biosynthesis. Functionally, involved in coproporphyrin-dependent heme b biosynthesis. Catalyzes the decarboxylation of Fe-coproporphyrin III (coproheme) to heme b (protoheme IX), the last step of the pathway. The reaction occurs in a stepwise manner with a three-propionate intermediate. The chain is Coproheme decarboxylase from Staphylococcus aureus (strain MSSA476).